Here is a 692-residue protein sequence, read N- to C-terminus: Elongation factor G (692 aa).

Positions 8–283 constitute a tr-type G domain; that stretch reads EMTRNIGIMA…AVLDYMPAPT (276 aa). GTP is bound by residues 17-24, 81-85, and 135-138; these read AHIDAGKT, DTPGH, and NKMD.

This sequence belongs to the TRAFAC class translation factor GTPase superfamily. Classic translation factor GTPase family. EF-G/EF-2 subfamily.

Its subcellular location is the cytoplasm. Functionally, catalyzes the GTP-dependent ribosomal translocation step during translation elongation. During this step, the ribosome changes from the pre-translocational (PRE) to the post-translocational (POST) state as the newly formed A-site-bound peptidyl-tRNA and P-site-bound deacylated tRNA move to the P and E sites, respectively. Catalyzes the coordinated movement of the two tRNA molecules, the mRNA and conformational changes in the ribosome. The protein is Elongation factor G of Citrifermentans bemidjiense (strain ATCC BAA-1014 / DSM 16622 / JCM 12645 / Bem) (Geobacter bemidjiensis).